The sequence spans 353 residues: Putative protein SPATA31J1 (353 aa).

A helical transmembrane segment spans residues 34–54 (IPQIIHFVLFVVFSLVILIIL). A disordered region spans residues 122–271 (EGSSHHLPRQ…NPGWVSWSDS (150 aa)). Low complexity predominate over residues 182-195 (SVESLGSPSSLSSS). Positions 211–221 (PPASTLSPNPT) are enriched in polar residues. The span at 222 to 237 (SSTESLGYLSSLSSSQ) shows a compositional bias: low complexity. Residues 244-262 (PLKHPSHKPRGRSLPRRRN) show a composition bias toward basic residues.

This sequence belongs to the SPATA31 family.

The protein resides in the membrane. This Homo sapiens (Human) protein is Putative protein SPATA31J1.